Reading from the N-terminus, the 104-residue chain is MSEEKPKEGVKTENDHINLKVAGQDGSVVQFKIKRHTPLSKLMKAYCERQGLSMRQIRFRFDGQPINETDTPAQLEMEDEDTIDVFQQQTGGSRVASCLLGSGL.

Residues Lys-5 and Lys-7 each participate in a glycyl lysine isopeptide (Lys-Gly) (interchain with G-Cter in SUMO2) cross-link. Lys-11 participates in a covalent cross-link: Glycyl lysine isopeptide (Lys-Gly) (interchain with G-Cter in SUMO); alternate. Lys-11 participates in a covalent cross-link: Glycyl lysine isopeptide (Lys-Gly) (interchain with G-Cter in SUMO2); alternate. Positions 15 to 92 (DHINLKVAGQ…IDVFQQQTGG (78 aa)) constitute a Ubiquitin-like domain. Gly-92 is covalently cross-linked (Glycyl lysine isopeptide (Gly-Lys) (interchain with K-? in acceptor proteins)). The propeptide occupies 93 to 104 (SRVASCLLGSGL).

It belongs to the ubiquitin family. SUMO subfamily. In terms of assembly, interacts with SAE2 and UBE2I. Covalently attached to a number of proteins. Interacts with USP25 (via ts SIM domain); the interaction sumoylates USP25 and inhibits its ubiquitin hydrolyzing activity. Interacts with BMAL1. In terms of processing, polymeric chains can be formed through Lys-11 cross-linking. Cleavage of precursor form by SENP1, SENP2 or SENP5 is necessary for function.

It is found in the cytoplasm. The protein localises to the nucleus. Its subcellular location is the PML body. In terms of biological role, ubiquitin-like protein which can be covalently attached to target lysines either as a monomer or as a lysine-linked polymer. Does not seem to be involved in protein degradation and may function as an antagonist of ubiquitin in the degradation process. Plays a role in a number of cellular processes such as nuclear transport, DNA replication and repair, mitosis and signal transduction. Covalent attachment to its substrates requires prior activation by the E1 complex SAE1-SAE2 and linkage to the E2 enzyme UBE2I, and can be promoted by an E3 ligase such as PIAS1-4, RANBP2 or CBX4. Plays a role in the regulation of sumoylation status of SETX. In Bos taurus (Bovine), this protein is Small ubiquitin-related modifier 3 (SUMO3).